Reading from the N-terminus, the 267-residue chain is MRLIIRTNYNDISKWAANHVAMRIKEFSPTKEKPFILGLPTGSSPIGMYKNLIEMNKIGKISFENVVTFNMDEYVGLDKNHPESYNSFMWNNFFSHIDIKKENVHMLNGNAINLTNECTEYENKIKSYGGIMLFVGGIGPDGHIAFNEPGSSLKSRTRLKTLTQDTIIANSRFFENDINKVPKSALTVGVGTIMDSKEVMIIVNGHNKARALRHAIEKGVNHMWTISTLQLHKNAIIVSDEAATYELKVGTVKYFNDIEKDNFNNDI.

Asp72 acts as the Proton acceptor; for enolization step in catalysis. Asp141 acts as the For ring-opening step in catalysis. His143 acts as the Proton acceptor; for ring-opening step in catalysis. The active-site For ring-opening step is the Glu148.

Belongs to the glucosamine/galactosamine-6-phosphate isomerase family. NagB subfamily.

The catalysed reaction is alpha-D-glucosamine 6-phosphate + H2O = beta-D-fructose 6-phosphate + NH4(+). Its pathway is amino-sugar metabolism; N-acetylneuraminate degradation; D-fructose 6-phosphate from N-acetylneuraminate: step 5/5. Allosterically activated by N-acetylglucosamine 6-phosphate (GlcNAc6P). Functionally, catalyzes the reversible isomerization-deamination of glucosamine 6-phosphate (GlcN6P) to form fructose 6-phosphate (Fru6P) and ammonium ion. The protein is Glucosamine-6-phosphate deaminase of Borrelia hermsii (strain HS1 / DAH).